The chain runs to 715 residues: uncharacterized protein (715 aa).

The chain crosses the membrane as a helical span at residues 688 to 708; it reads VWKFNPALYSTITNIFLLIIF.

This sequence belongs to the plectrovirus ORF1 family.

It is found in the host membrane. This is an uncharacterized protein from Spiroplasma virus SpV1-R8A2 B (SpV1).